The chain runs to 251 residues: Pyruvate formate-lyase-activating enzyme (251 aa).

Residues 15–244 form the Radical SAM core domain; that stretch reads VDGPGLRYIL…KEAYRYVNFN (230 aa). Residues C29, C33, and C36 each coordinate [4Fe-4S] cluster. Residues 35-37, G79, 134-136, and H207 contribute to the S-adenosyl-L-methionine site; these read YCH and DIK.

Belongs to the organic radical-activating enzymes family. [4Fe-4S] cluster is required as a cofactor.

Its subcellular location is the cytoplasm. The catalysed reaction is glycyl-[formate C-acetyltransferase] + reduced [flavodoxin] + S-adenosyl-L-methionine = glycin-2-yl radical-[formate C-acetyltransferase] + semiquinone [flavodoxin] + 5'-deoxyadenosine + L-methionine + H(+). Activation of pyruvate formate-lyase under anaerobic conditions by generation of an organic free radical, using S-adenosylmethionine and reduced flavodoxin as cosubstrates to produce 5'-deoxy-adenosine. The sequence is that of Pyruvate formate-lyase-activating enzyme (pflA) from Staphylococcus epidermidis (strain ATCC 12228 / FDA PCI 1200).